The sequence spans 232 residues: Large ribosomal subunit protein uL1 (232 aa).

It belongs to the universal ribosomal protein uL1 family. In terms of assembly, part of the 50S ribosomal subunit.

Its function is as follows. Binds directly to 23S rRNA. The L1 stalk is quite mobile in the ribosome, and is involved in E site tRNA release. In terms of biological role, protein L1 is also a translational repressor protein, it controls the translation of the L11 operon by binding to its mRNA. This Dichelobacter nodosus (strain VCS1703A) protein is Large ribosomal subunit protein uL1.